An 870-amino-acid polypeptide reads, in one-letter code: DNA mismatch repair protein MutS (870 aa).

620–627 is a binding site for ATP; the sequence is GPNMAGKS.

Belongs to the DNA mismatch repair MutS family.

This protein is involved in the repair of mismatches in DNA. It is possible that it carries out the mismatch recognition step. This protein has a weak ATPase activity. This Syntrophotalea carbinolica (strain DSM 2380 / NBRC 103641 / GraBd1) (Pelobacter carbinolicus) protein is DNA mismatch repair protein MutS.